A 312-amino-acid polypeptide reads, in one-letter code: MDNDDYIWLDYLTVEQPNQEKTDISVKHYYGIDIKTDKYLQNAIDIWELINKYGKKYFCNYGGETFQINIGDRFYVAHFPSQCLNNGCKYPVLIFLHGLTGYSWHSALDKTGLIELANQNNFIVLFGQGNGEITRPVRDKYGGVSFGDIYWQIENPELDMDYIRNVMNLQGTIEYCRQDDLNLLELRKMFSDKIYLIGYSNGAMYSFNMCFYDLHFSGICSMMGGYGGLAGYSNSKISEIVDRPINISLDIPIIILSGSLDEYLPASKKAFDILLGKNFSNVKFLSIPDRKHTYSRDFEKYIWEFFFTSTKN.

Residues serine 200, aspartate 261, and histidine 292 each act as charge relay system in the active site.

This sequence belongs to the AB hydrolase superfamily. AB hydrolase 2 family.

This is an uncharacterized protein from Acanthamoeba polyphaga mimivirus (APMV).